A 94-amino-acid chain; its full sequence is Co-chaperonin GroES (94 aa).

This sequence belongs to the GroES chaperonin family. As to quaternary structure, heptamer of 7 subunits arranged in a ring. Interacts with the chaperonin GroEL.

The protein localises to the cytoplasm. In terms of biological role, together with the chaperonin GroEL, plays an essential role in assisting protein folding. The GroEL-GroES system forms a nano-cage that allows encapsulation of the non-native substrate proteins and provides a physical environment optimized to promote and accelerate protein folding. GroES binds to the apical surface of the GroEL ring, thereby capping the opening of the GroEL channel. This Streptococcus agalactiae protein is Co-chaperonin GroES.